A 254-amino-acid chain; its full sequence is Protein GVQW3 (254 aa).

The sequence is that of Protein GVQW3 from Homo sapiens (Human).